Here is a 224-residue protein sequence, read N- to C-terminus: Peptidyl-prolyl cis-trans isomerase FKBP3 (224 aa).

N-acetylalanine is present on Ala-2. A Phosphoserine modification is found at Ser-36. Residues 87-119 (NVKLNEDKPKETKSEETPDEGPPKYTKSVLKKG) are disordered. The segment covering 89–102 (KLNEDKPKETKSEE) has biased composition (basic and acidic residues). At Lys-99 the chain carries N6-acetyllysine. The region spanning 128-224 (GDVVHCWYTG…IFEVELVDID (97 aa)) is the PPIase FKBP-type domain. A Phosphoserine modification is found at Ser-152. The residue at position 170 (Lys-170) is an N6-acetyllysine.

It belongs to the FKBP-type PPIase family.

It is found in the nucleus. The enzyme catalyses [protein]-peptidylproline (omega=180) = [protein]-peptidylproline (omega=0). With respect to regulation, inhibited preferentially by rapamycin over FK506. In terms of biological role, FK506- and rapamycin-binding proteins (FKBPs) constitute a family of receptors for the two immunosuppressants which inhibit T-cell proliferation by arresting two distinct cytoplasmic signal transmission pathways. PPIases accelerate the folding of proteins. This Oryctolagus cuniculus (Rabbit) protein is Peptidyl-prolyl cis-trans isomerase FKBP3 (FKBP3).